We begin with the raw amino-acid sequence, 135 residues long: Probable histone H2A.8 (135 aa).

The protein belongs to the histone H2A family. As to quaternary structure, the nucleosome is a histone octamer containing two molecules each of H2A, H2B, H3 and H4 assembled in one H3-H4 heterotetramer and two H2A-H2B heterodimers. The octamer wraps approximately 147 bp of DNA.

The protein resides in the nucleus. It localises to the chromosome. Core component of nucleosome. Nucleosomes wrap and compact DNA into chromatin, limiting DNA accessibility to the cellular machineries which require DNA as a template. Histones thereby play a central role in transcription regulation, DNA repair, DNA replication and chromosomal stability. DNA accessibility is regulated via a complex set of post-translational modifications of histones, also called histone code, and nucleosome remodeling. The polypeptide is Probable histone H2A.8 (Oryza sativa subsp. indica (Rice)).